The primary structure comprises 317 residues: Putative GTPase PH0274 (317 aa).

Residues 54 to 62 (GPPGAGKST), aspartate 196, and 231 to 233 (VGT) contribute to the GTP site.

Belongs to the SIMIBI class G3E GTPase family. ArgK/MeaB subfamily.

Functionally, may have GTPase activity. May also bind and hydrolyze ATP. May function as chaperone. The sequence is that of Putative GTPase PH0274 from Pyrococcus horikoshii (strain ATCC 700860 / DSM 12428 / JCM 9974 / NBRC 100139 / OT-3).